A 326-amino-acid chain; its full sequence is Diaminopimelate epimerase (326 aa).

The substrate site is built by Asn-13 and Asn-72. Catalysis depends on Cys-81, which acts as the Proton donor. Residues 82 to 83 (GN), Asn-169, Asn-205, and 223 to 224 (ER) each bind substrate. The Proton acceptor role is filled by Cys-232. 233–234 (GT) is a binding site for substrate.

It belongs to the diaminopimelate epimerase family. As to quaternary structure, homodimer.

It is found in the cytoplasm. It catalyses the reaction (2S,6S)-2,6-diaminopimelate = meso-2,6-diaminopimelate. Its pathway is amino-acid biosynthesis; L-lysine biosynthesis via DAP pathway; DL-2,6-diaminopimelate from LL-2,6-diaminopimelate: step 1/1. Its function is as follows. Catalyzes the stereoinversion of LL-2,6-diaminopimelate (L,L-DAP) to meso-diaminopimelate (meso-DAP), a precursor of L-lysine and an essential component of the bacterial peptidoglycan. The sequence is that of Diaminopimelate epimerase from Enterococcus faecalis (strain ATCC 700802 / V583).